The chain runs to 302 residues: RNA polymerase II holoenzyme cyclin-like subunit (302 aa).

The 90-residue stretch at 53–142 (QQLIKLGKRM…LGECEFSLIS (90 aa)) folds into the Cyclin N-terminal domain.

This sequence belongs to the cyclin family. Cyclin C subfamily. Component of the srb8-11 complex, a regulatory module of the Mediator complex.

It localises to the nucleus. Its function is as follows. Component of the srb8-11 complex. The srb8-11 complex is a regulatory module of the Mediator complex which is itself involved in regulation of basal and activated RNA polymerase II-dependent transcription. The srb8-11 complex may be involved in the transcriptional repression of a subset of genes regulated by Mediator. It may inhibit the association of the Mediator complex with RNA polymerase II to form the holoenzyme complex. The srb8-11 complex phosphorylates the C-terminal domain (CTD) of the largest subunit of RNA polymerase II. The protein is RNA polymerase II holoenzyme cyclin-like subunit (ssn8) of Aspergillus clavatus (strain ATCC 1007 / CBS 513.65 / DSM 816 / NCTC 3887 / NRRL 1 / QM 1276 / 107).